A 376-amino-acid polypeptide reads, in one-letter code: Probable sister chromatid cohesion protein DCC1 (376 aa).

Residues 213–232 (QKSPTNSGGGGEEIKGGGGD) are disordered. Positions 219-232 (SGGGGEEIKGGGGD) are enriched in gly residues.

It belongs to the DCC1 family.

It is found in the nucleus. Its function is as follows. Loads PCNA onto primed templates regulating velocity, spacing and restart activity of replication forks. May couple DNA replication to sister chromatid cohesion. This chain is Probable sister chromatid cohesion protein DCC1, found in Dictyostelium discoideum (Social amoeba).